The sequence spans 513 residues: Carotenoid isomerooxygenase (513 aa).

Residues His-184, His-242, His-312, and His-503 each contribute to the Fe cation site.

Belongs to the carotenoid oxygenase family. It depends on Fe(2+) as a cofactor.

It carries out the reaction all-trans-zeaxanthin + O2 = (3R)-11-cis-3-hydroxyretinal + (3R)-all-trans-3-hydroxyretinal. It functions in the pathway cofactor metabolism; retinol metabolism. In terms of biological role, catalyzes the oxidative cleavage at the 15,15'-double bond of carotenoids and the simultaneous all-trans to 11-cis isomerization of one cleavage product. Carotenoids like 11-cis retinal can promote visual pigment biogenesis in the dark. Essential for the biosynthesis of the 3-hydroxyretinal chromophore of rhodopsin from zeaxanthin and for proper photoreceptor development. In Galleria mellonella (Greater wax moth), this protein is Carotenoid isomerooxygenase (ninaB).